Here is a 337-residue protein sequence, read N- to C-terminus: Calcium-binding protein 39-like (337 aa).

The protein belongs to the Mo25 family. In terms of assembly, component of a trimeric complex composed of STK11/LKB1, STRAD (STRADA or STRADB) and CAB39/MO25 (CAB39/MO25alpha or CAB39L/MO25beta): the complex tethers STK11/LKB1 in the cytoplasm and stimulates its catalytic activity.

Component of a complex that binds and activates STK11/LKB1. In the complex, required to stabilize the interaction between CAB39/MO25 (CAB39/MO25alpha or CAB39L/MO25beta) and STK11/LKB1. The sequence is that of Calcium-binding protein 39-like (CAB39L) from Homo sapiens (Human).